The primary structure comprises 203 residues: Dephospho-CoA kinase (203 aa).

The DPCK domain maps to isoleucine 6–alanine 203. ATP is bound at residue glycine 14–alanine 19.

The protein belongs to the CoaE family.

The protein localises to the cytoplasm. It carries out the reaction 3'-dephospho-CoA + ATP = ADP + CoA + H(+). The protein operates within cofactor biosynthesis; coenzyme A biosynthesis; CoA from (R)-pantothenate: step 5/5. Its function is as follows. Catalyzes the phosphorylation of the 3'-hydroxyl group of dephosphocoenzyme A to form coenzyme A. This is Dephospho-CoA kinase from Pseudomonas aeruginosa (strain ATCC 15692 / DSM 22644 / CIP 104116 / JCM 14847 / LMG 12228 / 1C / PRS 101 / PAO1).